The primary structure comprises 381 residues: ELMO domain-containing protein 3 (381 aa).

One can recognise an ELMO domain in the interval 170-324 (THGRVLQTIY…DLEALAKKSP (155 aa)).

Both isoform 1 and isoform 2 are widely expressed.

It localises to the cell projection. It is found in the stereocilium. The protein resides in the kinocilium. The protein localises to the cytoplasm. Its subcellular location is the cytoskeleton. In terms of biological role, acts as a GTPase-activating protein (GAP) for ARL2 with low specific activity. The protein is ELMO domain-containing protein 3 (Elmod3) of Mus musculus (Mouse).